We begin with the raw amino-acid sequence, 299 residues long: Mitochondrial 2-oxodicarboxylate carrier (299 aa).

Solcar repeat units follow at residues 11–100 (REAS…YKKL), 107–196 (SPAL…VKNM), and 205–294 (LEFL…TYSW). 6 helical membrane-spanning segments follow: residues 17-37 (IVAG…LDVV), 70-89 (FGFY…KRAV), 113-133 (TIAG…FEVV), 167-187 (GLNK…MVYF), 205-225 (LEFL…SVIN), and 277-297 (LGPG…WLQE).

This sequence belongs to the mitochondrial carrier (TC 2.A.29) family.

It localises to the mitochondrion inner membrane. It carries out the reaction 2-oxoadipate(in) + 2-oxoglutarate(out) = 2-oxoadipate(out) + 2-oxoglutarate(in). The catalysed reaction is hexanedioate(in) + 2-oxoglutarate(out) = hexanedioate(out) + 2-oxoglutarate(in). It catalyses the reaction L-2-aminoadipate(in) + 2-oxoglutarate(out) = L-2-aminoadipate(out) + 2-oxoglutarate(in). The enzyme catalyses glutarate(in) + 2-oxoglutarate(out) = glutarate(out) + 2-oxoglutarate(in). It carries out the reaction 2-oxoheptanedioate(in) + 2-oxoglutarate(out) = 2-oxoheptanedioate(out) + 2-oxoglutarate(in). The catalysed reaction is heptanedioate(in) + 2-oxoglutarate(out) = heptanedioate(out) + 2-oxoglutarate(in). It catalyses the reaction citrate(in) + 2-oxoglutarate(out) = citrate(out) + 2-oxoglutarate(in). In terms of biological role, transports dicarboxylates across the inner membranes of mitochondria by a counter-exchange mechanism. Can transport 2-oxoadipate (2-oxohexanedioate), 2-oxoglutarate, adipate (hexanedioate), glutarate, and to a lesser extent, pimelate (heptanedioate), 2-oxopimelate (2-oxoheptanedioate), 2-aminoadipate (2-aminohexanedioate), oxaloacetate, and citrate. Plays a central role in catabolism of lysine, hydroxylysine, and tryptophan, by transporting common metabolite intermediates (such as 2-oxoadipate) into the mitochondria, where it is converted into acetyl-CoA and can enter the citric acid (TCA) cycle. This chain is Mitochondrial 2-oxodicarboxylate carrier (SLC25A21), found in Pongo abelii (Sumatran orangutan).